We begin with the raw amino-acid sequence, 145 residues long: Peptidyl-lysine N-acetyltransferase YjaB (145 aa).

One can recognise an N-acetyltransferase domain in the interval 3–144; sequence INIRRSRHEE…KPYPLLNLIY (142 aa).

This sequence belongs to the acetyltransferase family.

It catalyses the reaction L-lysyl-[protein] + acetyl-CoA = N(6)-acetyl-L-lysyl-[protein] + CoA + H(+). In terms of biological role, N-epsilon-lysine acetyltransferase that catalyzes acetylation of a large number of proteins. This chain is Peptidyl-lysine N-acetyltransferase YjaB (yjaB), found in Salmonella typhimurium (strain LT2 / SGSC1412 / ATCC 700720).